A 177-amino-acid polypeptide reads, in one-letter code: Large ribosomal subunit protein uL6 (177 aa).

The protein belongs to the universal ribosomal protein uL6 family. In terms of assembly, part of the 50S ribosomal subunit.

In terms of biological role, this protein binds to the 23S rRNA, and is important in its secondary structure. It is located near the subunit interface in the base of the L7/L12 stalk, and near the tRNA binding site of the peptidyltransferase center. This Albidiferax ferrireducens (strain ATCC BAA-621 / DSM 15236 / T118) (Rhodoferax ferrireducens) protein is Large ribosomal subunit protein uL6.